The sequence spans 297 residues: Glycine--tRNA ligase alpha subunit (297 aa).

Belongs to the class-II aminoacyl-tRNA synthetase family. In terms of assembly, tetramer of two alpha and two beta subunits.

It localises to the cytoplasm. It carries out the reaction tRNA(Gly) + glycine + ATP = glycyl-tRNA(Gly) + AMP + diphosphate. The chain is Glycine--tRNA ligase alpha subunit from Sulfurihydrogenibium sp. (strain YO3AOP1).